A 394-amino-acid chain; its full sequence is Elongation factor Tu 1 (394 aa).

Residues 10 to 204 form the tr-type G domain; sequence KPHVNVGTIG…FLDSYIPEPE (195 aa). The segment at 19–26 is G1; it reads GHVDHGKT. Position 19–26 (19–26) interacts with GTP; the sequence is GHVDHGKT. Thr-26 serves as a coordination point for Mg(2+). The segment at 60 to 64 is G2; that stretch reads GITIN. The G3 stretch occupies residues 81-84; it reads DCPG. GTP is bound by residues 81–85 and 136–139; these read DCPGH and NKCD. The interval 136-139 is G4; the sequence is NKCD. Positions 174-176 are G5; it reads SAL.

This sequence belongs to the TRAFAC class translation factor GTPase superfamily. Classic translation factor GTPase family. EF-Tu/EF-1A subfamily. As to quaternary structure, monomer.

The protein resides in the cytoplasm. The catalysed reaction is GTP + H2O = GDP + phosphate + H(+). Its function is as follows. GTP hydrolase that promotes the GTP-dependent binding of aminoacyl-tRNA to the A-site of ribosomes during protein biosynthesis. The sequence is that of Elongation factor Tu 1 from Shigella sonnei (strain Ss046).